Here is a 421-residue protein sequence, read N- to C-terminus: UDP-N-acetylglucosamine 1-carboxyvinyltransferase (421 aa).

Residue 22-23 (KN) participates in phosphoenolpyruvate binding. Residue R93 participates in UDP-N-acetyl-alpha-D-glucosamine binding. C117 (proton donor) is an active-site residue. 2-(S-cysteinyl)pyruvic acid O-phosphothioketal is present on C117. Residues 122-126 (RPVDL), D308, and L330 contribute to the UDP-N-acetyl-alpha-D-glucosamine site.

It belongs to the EPSP synthase family. MurA subfamily.

The protein localises to the cytoplasm. It catalyses the reaction phosphoenolpyruvate + UDP-N-acetyl-alpha-D-glucosamine = UDP-N-acetyl-3-O-(1-carboxyvinyl)-alpha-D-glucosamine + phosphate. It participates in cell wall biogenesis; peptidoglycan biosynthesis. Its function is as follows. Cell wall formation. Adds enolpyruvyl to UDP-N-acetylglucosamine. In Wolinella succinogenes (strain ATCC 29543 / DSM 1740 / CCUG 13145 / JCM 31913 / LMG 7466 / NCTC 11488 / FDC 602W) (Vibrio succinogenes), this protein is UDP-N-acetylglucosamine 1-carboxyvinyltransferase.